Here is a 91-residue protein sequence, read N- to C-terminus: Small ribosomal subunit protein bS20 (91 aa).

Over residues 1–18 (MPLHKSAEKRLRQSDRKN) the composition is skewed to basic and acidic residues. The segment at 1 to 25 (MPLHKSAEKRLRQSDRKNARNRARK) is disordered.

The protein belongs to the bacterial ribosomal protein bS20 family.

Functionally, binds directly to 16S ribosomal RNA. The sequence is that of Small ribosomal subunit protein bS20 from Chlorobium phaeovibrioides (strain DSM 265 / 1930) (Prosthecochloris vibrioformis (strain DSM 265)).